A 227-amino-acid chain; its full sequence is MMEVLLRLLVTQVILLALATSFVSCYDPNPLQDFCVAASETNRVFVNGKFCKDPKSVTANDFSYSGLNIARNTTNFLGSNVTTVDVNKIPGLNTLGVSLARLDFAQGGQNPPHIHPRATEILVVTKGKLLVGFVSSNQDNNRLFYKVLKRGDVFVFPIGLIHFQMNVRRTRAVAFAGFGSQNPGTIRIADAVFGSNPSIPQEVLAKAFQLDVKLVRFLHIVFGPPLW.

Positions 1-25 (MMEVLLRLLVTQVILLALATSFVSC) are cleaved as a signal peptide. Residues C35 and C51 are joined by a disulfide bond. The Cupin type-1 domain occupies 65–216 (SGLNIARNTT…AFQLDVKLVR (152 aa)). N72 and N80 each carry an N-linked (GlcNAc...) asparagine glycan. Mn(2+)-binding residues include H113, H115, E120, and H162.

Belongs to the germin family. Oligomer (believed to be a pentamer but probably hexamer).

Its subcellular location is the secreted. It is found in the extracellular space. The protein resides in the apoplast. May play a role in plant defense. Probably has no oxalate oxidase activity even if the active site is conserved. This chain is Germin-like protein subfamily 1 member 6, found in Arabidopsis thaliana (Mouse-ear cress).